The chain runs to 288 residues: Diaminopimelate epimerase (288 aa).

Substrate contacts are provided by N13, Q46, and N66. Residue C75 is the Proton donor of the active site. Residues 76–77 (GN), N166, N199, and 217–218 (ER) each bind substrate. C226 serves as the catalytic Proton acceptor. Substrate is bound at residue 227 to 228 (GT).

Belongs to the diaminopimelate epimerase family. As to quaternary structure, homodimer.

It is found in the cytoplasm. The catalysed reaction is (2S,6S)-2,6-diaminopimelate = meso-2,6-diaminopimelate. The protein operates within amino-acid biosynthesis; L-lysine biosynthesis via DAP pathway; DL-2,6-diaminopimelate from LL-2,6-diaminopimelate: step 1/1. In terms of biological role, catalyzes the stereoinversion of LL-2,6-diaminopimelate (L,L-DAP) to meso-diaminopimelate (meso-DAP), a precursor of L-lysine and an essential component of the bacterial peptidoglycan. The chain is Diaminopimelate epimerase from Cupriavidus taiwanensis (strain DSM 17343 / BCRC 17206 / CCUG 44338 / CIP 107171 / LMG 19424 / R1) (Ralstonia taiwanensis (strain LMG 19424)).